A 390-amino-acid chain; its full sequence is Transforming growth factor beta-1 proprotein (390 aa).

Residues 1 to 29 form the signal peptide; the sequence is MPPSGLRLLPLLLPLLWLLVLTPGRPAAG. Residues 30 to 74 are straightjacket domain; that stretch reads LSTCKTIDMELVKRKRIEAIRGQILSKLRLASPPSQGDVPPGPLP. The interval 75-271 is arm domain; it reads EAVLALYNST…ATPLERAQHL (197 aa). Asn82, Asn136, and Asn176 each carry an N-linked (GlcNAc...) asparagine glycan. Positions 226–252 are bowtie tail; sequence DSKDNTLHVEINGFNSGRRGDLATIHG. Positions 244–246 match the Cell attachment site motif; it reads RGD. 4 disulfide bridges follow: Cys285-Cys294, Cys293-Cys356, Cys322-Cys387, and Cys326-Cys389.

The protein belongs to the TGF-beta family. As to quaternary structure, homodimer; disulfide-linked. Interacts with the serine proteases, HTRA1 and HTRA3: the interaction with either inhibits TGFB1-mediated signaling and the HTRA protease activity is required for this inhibition. May interact with THSD4; this interaction may lead to sequestration by FBN1 microfibril assembly and attenuation of TGFB signaling. Interacts with CD109, DPT and ASPN. Interacts with EFEMP2. Interacts with TSKU; the interaction contributes to regulation of the hair cycle. Interacts with TGFBR3. In terms of assembly, homodimer; disulfide-linked. Interacts with transforming growth factor beta-1 (TGF-beta-1) chain; interaction is non-covalent and maintains TGF-beta-1 in a latent state; each latency-associated peptide (LAP) monomer interacts with TGF-beta-1 in the other monomer. Interacts with LTBP1; leading to regulation of TGF-beta-1 activation. Interacts with LRRC32/GARP; leading to regulation of TGF-beta-1 activation on the surface of activated regulatory T-cells (Tregs). Interacts with LRRC33/NRROS; leading to regulation of TGF-beta-1 activation in macrophages and microglia. Interacts (via cell attachment site) with integrins ITGAV and ITGB6 (ITGAV:ITGB6), leading to release of the active TGF-beta-1. Interacts with NREP; the interaction results in a decrease in TGFB1 autoinduction. Interacts with HSP90AB1; inhibits latent TGFB1 activation. Homodimer; disulfide-linked. Interacts with TGF-beta receptors (TGFBR1 and TGFBR2), leading to signal transduction. Post-translationally, transforming growth factor beta-1 proprotein: The precursor proprotein is cleaved in the Golgi apparatus by FURIN to form Transforming growth factor beta-1 (TGF-beta-1) and Latency-associated peptide (LAP) chains, which remain non-covalently linked, rendering TGF-beta-1 inactive. In terms of processing, N-glycosylated. Deglycosylation leads to activation of Transforming growth factor beta-1 (TGF-beta-1); mechanisms triggering deglycosylation-driven activation of TGF-beta-1 are however unclear.

The protein localises to the secreted. It is found in the extracellular space. Its subcellular location is the extracellular matrix. Its function is as follows. Transforming growth factor beta-1 proprotein: Precursor of the Latency-associated peptide (LAP) and Transforming growth factor beta-1 (TGF-beta-1) chains, which constitute the regulatory and active subunit of TGF-beta-1, respectively. Required to maintain the Transforming growth factor beta-1 (TGF-beta-1) chain in a latent state during storage in extracellular matrix. Associates non-covalently with TGF-beta-1 and regulates its activation via interaction with 'milieu molecules', such as LTBP1, LRRC32/GARP and LRRC33/NRROS, that control activation of TGF-beta-1. Interaction with LRRC33/NRROS regulates activation of TGF-beta-1 in macrophages and microglia. Interaction with LRRC32/GARP controls activation of TGF-beta-1 on the surface of activated regulatory T-cells (Tregs). Interaction with integrins (ITGAV:ITGB6 or ITGAV:ITGB8) results in distortion of the Latency-associated peptide chain and subsequent release of the active TGF-beta-1. In terms of biological role, multifunctional protein that regulates the growth and differentiation of various cell types and is involved in various processes, such as normal development, immune function, microglia function and responses to neurodegeneration. Activation into mature form follows different steps: following cleavage of the proprotein in the Golgi apparatus, Latency-associated peptide (LAP) and Transforming growth factor beta-1 (TGF-beta-1) chains remain non-covalently linked rendering TGF-beta-1 inactive during storage in extracellular matrix. At the same time, LAP chain interacts with 'milieu molecules', such as LTBP1, LRRC32/GARP and LRRC33/NRROS that control activation of TGF-beta-1 and maintain it in a latent state during storage in extracellular milieus. TGF-beta-1 is released from LAP by integrins (ITGAV:ITGB6 or ITGAV:ITGB8): integrin-binding to LAP stabilizes an alternative conformation of the LAP bowtie tail and results in distortion of the LAP chain and subsequent release of the active TGF-beta-1. Once activated following release of LAP, TGF-beta-1 acts by binding to TGF-beta receptors (TGFBR1 and TGFBR2), which transduce signal. While expressed by many cells types, TGF-beta-1 only has a very localized range of action within cell environment thanks to fine regulation of its activation by Latency-associated peptide chain (LAP) and 'milieu molecules'. Plays an important role in bone remodeling: acts as a potent stimulator of osteoblastic bone formation, causing chemotaxis, proliferation and differentiation in committed osteoblasts. Can promote either T-helper 17 cells (Th17) or regulatory T-cells (Treg) lineage differentiation in a concentration-dependent manner. At high concentrations, leads to FOXP3-mediated suppression of RORC and down-regulation of IL-17 expression, favoring Treg cell development. At low concentrations in concert with IL-6 and IL-21, leads to expression of the IL-17 and IL-23 receptors, favoring differentiation to Th17 cells. Stimulates sustained production of collagen through the activation of CREB3L1 by regulated intramembrane proteolysis (RIP). Mediates SMAD2/3 activation by inducing its phosphorylation and subsequent translocation to the nucleus. Positively regulates odontoblastic differentiation in dental papilla cells, via promotion of IPO7-mediated translocation of phosphorylated SMAD2 to the nucleus and subsequent transcription of target genes. Can induce epithelial-to-mesenchymal transition (EMT) and cell migration in various cell types. This Sus scrofa (Pig) protein is Transforming growth factor beta-1 proprotein (TGFB1).